The following is a 150-amino-acid chain: D-aminoacyl-tRNA deacylase (150 aa).

Residues 137–138 (GP) carry the Gly-cisPro motif, important for rejection of L-amino acids motif.

It belongs to the DTD family. Homodimer.

It localises to the cytoplasm. It carries out the reaction glycyl-tRNA(Ala) + H2O = tRNA(Ala) + glycine + H(+). The enzyme catalyses a D-aminoacyl-tRNA + H2O = a tRNA + a D-alpha-amino acid + H(+). Its function is as follows. An aminoacyl-tRNA editing enzyme that deacylates mischarged D-aminoacyl-tRNAs. Also deacylates mischarged glycyl-tRNA(Ala), protecting cells against glycine mischarging by AlaRS. Acts via tRNA-based rather than protein-based catalysis; rejects L-amino acids rather than detecting D-amino acids in the active site. By recycling D-aminoacyl-tRNA to D-amino acids and free tRNA molecules, this enzyme counteracts the toxicity associated with the formation of D-aminoacyl-tRNA entities in vivo and helps enforce protein L-homochirality. The polypeptide is D-aminoacyl-tRNA deacylase (Geotalea daltonii (strain DSM 22248 / JCM 15807 / FRC-32) (Geobacter daltonii)).